Consider the following 487-residue polypeptide: Malonate-semialdehyde dehydrogenase (487 aa).

NAD(+)-binding residues include alanine 150, phenylalanine 152, lysine 176, glutamate 179, arginine 180, serine 229, and threonine 251. Cysteine 284 acts as the Nucleophile in catalysis. Residue glutamate 382 coordinates NAD(+).

The protein belongs to the aldehyde dehydrogenase family. IolA subfamily. Homotetramer.

The enzyme catalyses 3-oxopropanoate + NAD(+) + CoA + H2O = hydrogencarbonate + acetyl-CoA + NADH + H(+). It catalyses the reaction 2-methyl-3-oxopropanoate + NAD(+) + CoA + H2O = propanoyl-CoA + hydrogencarbonate + NADH + H(+). It participates in polyol metabolism; myo-inositol degradation into acetyl-CoA; acetyl-CoA from myo-inositol: step 7/7. Catalyzes the oxidation of malonate semialdehyde (MSA) and methylmalonate semialdehyde (MMSA) into acetyl-CoA and propanoyl-CoA, respectively. Is involved in a myo-inositol catabolic pathway. Bicarbonate, and not CO2, is the end-product of the enzymatic reaction. The sequence is that of Malonate-semialdehyde dehydrogenase from Bacillus subtilis subsp. natto.